Consider the following 439-residue polypeptide: GTPase Der (439 aa).

EngA-type G domains lie at 4-168 and 177-352; these read PIVA…KDDE and INIA…DNYN. Residues 10–17, 57–61, 120–123, 183–190, 230–234, and 295–298 contribute to the GTP site; these read GRPNVGKS, DTGGI, NKID, GKPNVGKS, DTAGL, and NKWD. Residues 353–437 form the KH-like domain; sequence KRVKTGVLND…GIKSEFRERK (85 aa).

This sequence belongs to the TRAFAC class TrmE-Era-EngA-EngB-Septin-like GTPase superfamily. EngA (Der) GTPase family. Associates with the 50S ribosomal subunit.

Functionally, GTPase that plays an essential role in the late steps of ribosome biogenesis. The polypeptide is GTPase Der (Clostridium botulinum (strain ATCC 19397 / Type A)).